Here is a 71-residue protein sequence, read N- to C-terminus: Cell division protein FtsB (71 aa).

Over methionine 1–isoleucine 3 the chain is Cytoplasmic. A helical membrane pass occupies residues leucine 4–phenylalanine 21. Residues glycine 22–threonine 71 are Extracellular-facing.

Belongs to the FtsB family.

It localises to the cell membrane. Functionally, essential cell division protein. May link together the upstream cell division proteins, which are predominantly cytoplasmic, with the downstream cell division proteins, which are predominantly extracellular. This Buchnera aphidicola subsp. Acyrthosiphon pisum (strain APS) (Acyrthosiphon pisum symbiotic bacterium) protein is Cell division protein FtsB.